We begin with the raw amino-acid sequence, 333 residues long: Dioxygenase cnsJ (333 aa).

Positions 153, 155, and 235 each coordinate Fe cation. The tract at residues 309-333 (NAQPEGEDDGGMKPNEGEHVVEAQI) is disordered. The segment covering 323–333 (NEGEHVVEAQI) has biased composition (basic and acidic residues).

This sequence belongs to the PhyH family. In terms of assembly, homodimer. The cofactor is Fe cation.

Its pathway is alkaloid biosynthesis. Its function is as follows. Dioxygenase; part of the gene cluster that mediates the biosynthesis of communesins, a prominent class of indole alkaloids with great potential as pharmaceuticals. Communesins are biosynthesized by the coupling of tryptamine and aurantioclavine, two building blocks derived from L-tryptophan. The L-tryptophan decarboxylase cnsB converts L-tryptophan to tryptamine, whereas the tryptophan dimethylallyltransferase cnsF converts L-tryptophan to 4-dimethylallyl tryptophan which is further transformed to aurantioclavine by the aurantioclavine synthase cnsA, probably aided by the catalase cnsD. The cytochrome P450 monooxygenase cnsC catalyzes the heterodimeric coupling between the two different indole moieties, tryptamine and aurantioclavine, to construct vicinal quaternary stereocenters and yield the heptacyclic communesin scaffold. The O-methyltransferase cnsE then methylates the communesin scaffold to produce communesin K, the simplest characterized communesin that contains the heptacyclic core. The dioxygenase cnsJ converts communesin K into communesin I. Acylation to introduce the hexadienyl group at position N16 of communesin I by the acyltransferase cnsK leads to the production of communesin B. The hexadienyl group is produced by the highly reducing polyketide synthase cnsI, before being hydrolytically removed from cnsI by the serine hydrolase cnsH, converted into hexadienyl-CoA by the CoA ligase cnsG, and then transferred to communesin I by cnsK. Surprisingly, cnsK may also be a promiscuous acyltransferase that can tolerate a range of acyl groups, including acetyl-, propionyl-, and butyryl-CoA, which lead to communesins A, G and H respectively. The roles of the alpha-ketoglutarate-dependent dioxygenases cnsM and cnsP have still to be determined. The chain is Dioxygenase cnsJ from Penicillium expansum (Blue mold rot fungus).